A 478-amino-acid chain; its full sequence is MKEFWQTCVSRLEQELPPQQISAWIRPLVPLAYDETQAVLRVAAPNRFKLDWVRKNFSHQIEALAAEWFQRPVQVAFELPAGGAGPRMPAVPRTPAGAPAPVSAGMAATPAGAPAQAPVAPAAVAAAVQADAAGVVYERSRLNTDLTFDNFVTGKANQLARAAALQVAENPGISYNPLFLYGGVGLGKTHLIHAIGNAMVAAGTGVRVRYVHADQYVSDVVKAYQRKAFDDFKRYYHSLDLLLIDDIQFFSGKSRTQEEFFYAFEAMVAQRKQIIITSDTYPKELAGIDSRLISRFDSGLTVAIEPPELEMRVAILLRKAESEGVPMPEEVAFFIAKHLRSNVRELEGALRKVLAYARFHGRDVLSVDVCKEALKDLLSVSNGQITVENIQKTVADFYKIKVADMYSKRRPANIALPRQVAMYLAKELTQKSLPEIGDLFGGRDHTTVLHAVRKISDARAKQAELNHTLHVLEQTLKG.

The domain I, interacts with DnaA modulators stretch occupies residues 1–71 (MKEFWQTCVS…EALAAEWFQR (71 aa)). A domain II region spans residues 71–140 (RPVQVAFELP…DAAGVVYERS (70 aa)). Residues 141–357 (RLNTDLTFDN…GALRKVLAYA (217 aa)) form a domain III, AAA+ region region. The ATP site is built by Gly185, Gly187, Lys188, and Thr189. The domain IV, binds dsDNA stretch occupies residues 358-478 (RFHGRDVLSV…LHVLEQTLKG (121 aa)).

Belongs to the DnaA family. Oligomerizes as a right-handed, spiral filament on DNA at oriC.

Its subcellular location is the cytoplasm. Functionally, plays an essential role in the initiation and regulation of chromosomal replication. ATP-DnaA binds to the origin of replication (oriC) to initiate formation of the DNA replication initiation complex once per cell cycle. Binds the DnaA box (a 9 base pair repeat at the origin) and separates the double-stranded (ds)DNA. Forms a right-handed helical filament on oriC DNA; dsDNA binds to the exterior of the filament while single-stranded (ss)DNA is stabiized in the filament's interior. The ATP-DnaA-oriC complex binds and stabilizes one strand of the AT-rich DNA unwinding element (DUE), permitting loading of DNA polymerase. After initiation quickly degrades to an ADP-DnaA complex that is not apt for DNA replication. Binds acidic phospholipids. This Bordetella petrii (strain ATCC BAA-461 / DSM 12804 / CCUG 43448) protein is Chromosomal replication initiator protein DnaA.